The chain runs to 363 residues: Protein-glutamate methylesterase/protein-glutamine glutaminase 3 (363 aa).

The 118-residue stretch at 8–125 (KVLCVDDSAL…RDGMLDYAEK (118 aa)) folds into the Response regulatory domain. A 4-aspartylphosphate modification is found at Asp-59. Residues 164 to 356 (LVSTEKLIII…RRVMARLATM (193 aa)) enclose the CheB-type methylesterase domain. Active-site residues include Ser-176, His-202, and Asp-298.

The protein belongs to the CheB family. Post-translationally, phosphorylated by CheA. Phosphorylation of the N-terminal regulatory domain activates the methylesterase activity.

The protein resides in the cytoplasm. The enzyme catalyses [protein]-L-glutamate 5-O-methyl ester + H2O = L-glutamyl-[protein] + methanol + H(+). It catalyses the reaction L-glutaminyl-[protein] + H2O = L-glutamyl-[protein] + NH4(+). In terms of biological role, involved in chemotaxis. Part of a chemotaxis signal transduction system that modulates chemotaxis in response to various stimuli. Catalyzes the demethylation of specific methylglutamate residues introduced into the chemoreceptors (methyl-accepting chemotaxis proteins or MCP) by CheR. Also mediates the irreversible deamidation of specific glutamine residues to glutamic acid. This chain is Protein-glutamate methylesterase/protein-glutamine glutaminase 3, found in Burkholderia lata (strain ATCC 17760 / DSM 23089 / LMG 22485 / NCIMB 9086 / R18194 / 383).